Reading from the N-terminus, the 379-residue chain is Pathogen-associated molecular patterns-induced protein A70 (379 aa).

A helical transmembrane segment spans residues Val7 to Val29. Asn122 carries N-linked (GlcNAc...) asparagine glycosylation. The disordered stretch occupies residues Thr133–Ala154. The segment covering Pro137–Pro149 has biased composition (basic and acidic residues). Asn170 carries an N-linked (GlcNAc...) asparagine glycan. 2 disordered regions span residues Pro216–Ala238 and Ser256–Asp347. Positions Pro221–Asn231 are enriched in polar residues. 2 stretches are compositionally biased toward basic and acidic residues: residues Ser256 to Lys285 and Ser322 to Arg335.

The protein resides in the membrane. The polypeptide is Pathogen-associated molecular patterns-induced protein A70 (Arabidopsis thaliana (Mouse-ear cress)).